The primary structure comprises 124 residues: MPTIQQLIRTERQSSKAKTKSPALKSCPERRGVCTRVYTSTPKKPNSALRKVARVRLTSGFEVTAYIGGIGHNLQEHSVVLIRGGRVKDLPGVRYHIIRGTLDTAGVKDRRQSRSKYGAKTPKE.

The interval 1–28 (MPTIQQLIRTERQSSKAKTKSPALKSCP) is disordered. Aspartate 89 carries the post-translational modification 3-methylthioaspartic acid. Positions 104–124 (TAGVKDRRQSRSKYGAKTPKE) are disordered.

It belongs to the universal ribosomal protein uS12 family. Part of the 30S ribosomal subunit. Contacts proteins S8 and S17. May interact with IF1 in the 30S initiation complex.

Functionally, with S4 and S5 plays an important role in translational accuracy. In terms of biological role, interacts with and stabilizes bases of the 16S rRNA that are involved in tRNA selection in the A site and with the mRNA backbone. Located at the interface of the 30S and 50S subunits, it traverses the body of the 30S subunit contacting proteins on the other side and probably holding the rRNA structure together. The combined cluster of proteins S8, S12 and S17 appears to hold together the shoulder and platform of the 30S subunit. The polypeptide is Small ribosomal subunit protein uS12 (Synechococcus sp. (strain WH7803)).